A 300-amino-acid chain; its full sequence is NADH-cytochrome b5 reductase 1 (300 aa).

The chain crosses the membrane as a helical span at residues 8–28 (PLVVFATVATIIISFVTLYFF). Positions 34–45 (SSTTSSSSSSSS) are enriched in low complexity. Positions 34–54 (SSTTSSSSSSSSKSKKGSPAL) are disordered. The 104-residue stretch at 57–160 (DKFQKFPLIS…RGPKGFFTYT (104 aa)) folds into the FAD-binding FR-type domain. FAD is bound by residues 140–155 (AEKQ…GPKG) and 166–198 (SLGL…KVHL).

The protein belongs to the flavoprotein pyridine nucleotide cytochrome reductase family. In terms of assembly, monomer. Component of the 2-(3-amino-3-carboxypropyl)histidine synthase complex composed of DPH1, DPH2, DPH3 and a NADH-dependent reductase, predominantly CBR1. The cofactor is FAD.

Its subcellular location is the mitochondrion outer membrane. It carries out the reaction 2 Fe(III)-[cytochrome b5] + NADH = 2 Fe(II)-[cytochrome b5] + NAD(+) + H(+). The catalysed reaction is 2 Fe(3+)-[Dph3] + NADH = 2 Fe(2+)-[Dph3] + NAD(+) + H(+). It functions in the pathway protein modification; peptidyl-diphthamide biosynthesis. In terms of biological role, NADH-dependent reductase for DPH3 and cytochrome b5. Required for the first step of diphthamide biosynthesis, a post-translational modification of histidine which occurs in elongation factor 2. DPH1 and DPH2 transfer a 3-amino-3-carboxypropyl (ACP) group from S-adenosyl-L-methionine (SAM) to a histidine residue, the reaction is assisted by a reduction system comprising DPH3 and a NADH-dependent reductase, predominantly CBR1. By reducing DPH3, also involved in the formation of the tRNA wobble base modification mcm5s 2U (5-methoxycarbonylmethyl-2-thiouridine), mediated by the elongator complex. The cytochrome b5/NADH cytochrome b5 reductase electron transfer system supports the catalytic activity of several sterol biosynthetic enzymes. This is NADH-cytochrome b5 reductase 1 (CBR1) from Lodderomyces elongisporus (strain ATCC 11503 / CBS 2605 / JCM 1781 / NBRC 1676 / NRRL YB-4239) (Yeast).